Consider the following 235-residue polypeptide: Protein GrpE (235 aa).

Over residues 1-18 (MTDGNQKPDGNSGEQVTV) the composition is skewed to polar residues. Disordered regions lie at residues 1–50 (MTDG…DAAH) and 198–235 (ESVDDGTAVADTAENDQADQGNSADTLGEQAESEPSGS). Residues 19-35 (TDKRRIDPETGEVRHVP) are compositionally biased toward basic and acidic residues.

The protein belongs to the GrpE family. As to quaternary structure, homodimer.

It localises to the cytoplasm. Its function is as follows. Participates actively in the response to hyperosmotic and heat shock by preventing the aggregation of stress-denatured proteins, in association with DnaK and GrpE. It is the nucleotide exchange factor for DnaK and may function as a thermosensor. Unfolded proteins bind initially to DnaJ; upon interaction with the DnaJ-bound protein, DnaK hydrolyzes its bound ATP, resulting in the formation of a stable complex. GrpE releases ADP from DnaK; ATP binding to DnaK triggers the release of the substrate protein, thus completing the reaction cycle. Several rounds of ATP-dependent interactions between DnaJ, DnaK and GrpE are required for fully efficient folding. This is Protein GrpE from Mycobacterium bovis (strain BCG / Pasteur 1173P2).